Reading from the N-terminus, the 214-residue chain is MASCAVQLIDKVPKKKVEKKKFEPNILKEPCMKHPLQNRWGLWFYKNDKSKMWQDNLRLITKFDTVEDFWGLYNNIQLPSKLSSGCDYSMFKDGIEPMWEDRSNKCGGRWLITLAKQHRHTELDHFWLETLLCLIGEGFSSFSRDICGSVINIRAKGDKIALWTSNAENCETVTYIGRKYKESLGLPQKLVIGYQAHADTATKSNSITKNKFVV.

Residues 53–54 (WQ), 99–100 (WE), 154–159 (RAKGDK), and 202–204 (TKS) contribute to the mRNA site.

Ovary, muscle and testis.

The protein resides in the cytoplasm. It is found in the nucleus. Its function is as follows. Does not appear to be a mRNA-cap-binding protein. The polypeptide is Eukaryotic translation initiation factor 4E-1B (Danio rerio (Zebrafish)).